The following is a 142-amino-acid chain: Large ribosomal subunit protein uL11 (142 aa).

The protein belongs to the universal ribosomal protein uL11 family. As to quaternary structure, part of the ribosomal stalk of the 50S ribosomal subunit. Interacts with L10 and the large rRNA to form the base of the stalk. L10 forms an elongated spine to which L12 dimers bind in a sequential fashion forming a multimeric L10(L12)X complex. One or more lysine residues are methylated.

Functionally, forms part of the ribosomal stalk which helps the ribosome interact with GTP-bound translation factors. This is Large ribosomal subunit protein uL11 from Lachnoclostridium phytofermentans (strain ATCC 700394 / DSM 18823 / ISDg) (Clostridium phytofermentans).